Here is a 446-residue protein sequence, read N- to C-terminus: Phosphoglucosamine mutase (446 aa).

The active-site Phosphoserine intermediate is serine 101. Residues serine 101, aspartate 240, aspartate 242, and aspartate 244 each coordinate Mg(2+). At serine 101 the chain carries Phosphoserine.

This sequence belongs to the phosphohexose mutase family. Requires Mg(2+) as cofactor. In terms of processing, activated by phosphorylation.

It carries out the reaction alpha-D-glucosamine 1-phosphate = D-glucosamine 6-phosphate. Catalyzes the conversion of glucosamine-6-phosphate to glucosamine-1-phosphate. The chain is Phosphoglucosamine mutase from Pseudomonas putida (strain ATCC 700007 / DSM 6899 / JCM 31910 / BCRC 17059 / LMG 24140 / F1).